The sequence spans 153 residues: 6,7-dimethyl-8-ribityllumazine synthase (153 aa).

5-amino-6-(D-ribitylamino)uracil-binding positions include F22, 56 to 58 (AFE), and 80 to 82 (AVI). Position 85 to 86 (85 to 86 (ST)) interacts with (2S)-2-hydroxy-3-oxobutyl phosphate. Residue H88 is the Proton donor of the active site. F113 contributes to the 5-amino-6-(D-ribitylamino)uracil binding site. Position 127 (R127) interacts with (2S)-2-hydroxy-3-oxobutyl phosphate.

The protein belongs to the DMRL synthase family.

The enzyme catalyses (2S)-2-hydroxy-3-oxobutyl phosphate + 5-amino-6-(D-ribitylamino)uracil = 6,7-dimethyl-8-(1-D-ribityl)lumazine + phosphate + 2 H2O + H(+). It functions in the pathway cofactor biosynthesis; riboflavin biosynthesis; riboflavin from 2-hydroxy-3-oxobutyl phosphate and 5-amino-6-(D-ribitylamino)uracil: step 1/2. In terms of biological role, catalyzes the formation of 6,7-dimethyl-8-ribityllumazine by condensation of 5-amino-6-(D-ribitylamino)uracil with 3,4-dihydroxy-2-butanone 4-phosphate. This is the penultimate step in the biosynthesis of riboflavin. This is 6,7-dimethyl-8-ribityllumazine synthase from Clostridium botulinum (strain Eklund 17B / Type B).